Here is a 357-residue protein sequence, read N- to C-terminus: Protein pelota homolog (357 aa).

This sequence belongs to the eukaryotic release factor 1 family. Pelota subfamily. In terms of assembly, monomer. A divalent metal cation serves as cofactor.

The protein localises to the cytoplasm. Its function is as follows. May function in recognizing stalled ribosomes, interact with stem-loop structures in stalled mRNA molecules, and effect endonucleolytic cleavage of the mRNA. May play a role in the release non-functional ribosomes and degradation of damaged mRNAs. Has endoribonuclease activity. This Halobacterium salinarum (strain ATCC 29341 / DSM 671 / R1) protein is Protein pelota homolog.